The primary structure comprises 237 residues: Purine nucleoside phosphorylase DeoD-type (237 aa).

H4 provides a ligand contact to a purine D-ribonucleoside. Residues G20, R24, R43, and 87–90 contribute to the phosphate site; that span reads RVGT. A purine D-ribonucleoside contacts are provided by residues 179 to 181 and 203 to 204; these read EME and SD. The active-site Proton donor is the D204.

Belongs to the PNP/UDP phosphorylase family. As to quaternary structure, homohexamer; trimer of homodimers.

It catalyses the reaction a purine D-ribonucleoside + phosphate = a purine nucleobase + alpha-D-ribose 1-phosphate. The enzyme catalyses a purine 2'-deoxy-D-ribonucleoside + phosphate = a purine nucleobase + 2-deoxy-alpha-D-ribose 1-phosphate. In terms of biological role, catalyzes the reversible phosphorolytic breakdown of the N-glycosidic bond in the beta-(deoxy)ribonucleoside molecules, with the formation of the corresponding free purine bases and pentose-1-phosphate. The protein is Purine nucleoside phosphorylase DeoD-type of Streptococcus pyogenes serotype M12 (strain MGAS2096).